A 21-amino-acid chain; its full sequence is Thioredoxin (21 aa).

Lys3 is modified (N6-acetyllysine). At Lys8 the chain carries N6-succinyllysine.

Belongs to the thioredoxin family. In terms of assembly, homodimer; disulfide-linked. Interacts with TXNIP through the redox-active site. Interacts with MAP3K5 and CASP3. Interacts with APEX1; the interaction stimulates the FOS/JUN AP-1 DNA-binding activity in a redox-dependent manner.

The protein resides in the nucleus. It is found in the cytoplasm. It localises to the secreted. Its function is as follows. Participates in various redox reactions through the reversible oxidation of its active center dithiol to a disulfide and catalyzes dithiol-disulfide exchange reactions. Plays a role in the reversible S-nitrosylation of cysteine residues in target proteins, and thereby contributes to the response to intracellular nitric oxide. Nitrosylates the active site Cys of CASP3 in response to nitric oxide (NO), and thereby inhibits caspase-3 activity. Induces the FOS/JUN AP-1 DNA binding activity in ionizing radiation (IR) cells through its oxidation/reduction status and stimulates AP-1 transcriptional activity. The sequence is that of Thioredoxin (TXN) from Canis lupus familiaris (Dog).